A 529-amino-acid polypeptide reads, in one-letter code: Lysine--tRNA ligase (529 aa).

A 'HIGH' region motif is present at residues 29 to 37 (ISGSVHIGN). The 'KMSKS' region motif lies at 274 to 278 (AMSKS). Lysine 277 is an ATP binding site.

It belongs to the class-I aminoacyl-tRNA synthetase family.

Its subcellular location is the cytoplasm. It carries out the reaction tRNA(Lys) + L-lysine + ATP = L-lysyl-tRNA(Lys) + AMP + diphosphate. This Methanosphaera stadtmanae (strain ATCC 43021 / DSM 3091 / JCM 11832 / MCB-3) protein is Lysine--tRNA ligase.